We begin with the raw amino-acid sequence, 222 residues long: N-(5'-phosphoribosyl)anthranilate isomerase (222 aa).

The protein belongs to the TrpF family.

The catalysed reaction is N-(5-phospho-beta-D-ribosyl)anthranilate = 1-(2-carboxyphenylamino)-1-deoxy-D-ribulose 5-phosphate. Its pathway is amino-acid biosynthesis; L-tryptophan biosynthesis; L-tryptophan from chorismate: step 3/5. The sequence is that of N-(5'-phosphoribosyl)anthranilate isomerase from Beijerinckia indica subsp. indica (strain ATCC 9039 / DSM 1715 / NCIMB 8712).